The sequence spans 167 residues: Large ribosomal subunit protein uL10 (167 aa).

It belongs to the universal ribosomal protein uL10 family. In terms of assembly, part of the ribosomal stalk of the 50S ribosomal subunit. The N-terminus interacts with L11 and the large rRNA to form the base of the stalk. The C-terminus forms an elongated spine to which L12 dimers bind in a sequential fashion forming a multimeric L10(L12)X complex.

Functionally, forms part of the ribosomal stalk, playing a central role in the interaction of the ribosome with GTP-bound translation factors. The protein is Large ribosomal subunit protein uL10 of Streptococcus mutans serotype c (strain ATCC 700610 / UA159).